Reading from the N-terminus, the 1048-residue chain is Selenate reductase subunit A (1048 aa).

Positions 1–39 (MENQHQKFISRRNFIKTSALLGGTAFLGTGLPNIKKTYS) form a signal peptide, tat-type signal. The region spanning 56–129 (ENILYSACLQ…AGIQHAYDPY (74 aa)) is the 4Fe-4S Mo/W bis-MGD-type domain. Cys63, Cys66, Cys70, and Cys115 together coordinate [4Fe-4S] cluster. Cys270 provides a ligand contact to Mo-bis(molybdopterin guanine dinucleotide).

It belongs to the prokaryotic molybdopterin-containing oxidoreductase family. In terms of assembly, the complex is composed of three subunits: SrdA, SrdB and SrdC. It depends on [4Fe-4S] cluster as a cofactor. Mo-bis(molybdopterin guanine dinucleotide) serves as cofactor. Predicted to be exported by the Tat system. The position of the signal peptide cleavage has not been experimentally proven.

It localises to the secreted. It carries out the reaction selenite + a quinone + H2O = selenate + a quinol. Functionally, component of the respiratory selenate reductase complex, which catalyzes the reduction of selenate to selenite. SrdA is probably the catalytic subunit that reduces selenate. The sequence is that of Selenate reductase subunit A from Mesobacillus selenatarsenatis (strain DSM 18680 / JCM 14380 / FERM P-15431 / SF-1).